The sequence spans 337 residues: tRNA N6-adenosine threonylcarbamoyltransferase (337 aa).

The Fe cation site is built by H111 and H115. Substrate is bound by residues 134-138 (LVSGG), D167, G180, and N272. Residue D300 coordinates Fe cation.

The protein belongs to the KAE1 / TsaD family. Requires Fe(2+) as cofactor.

It is found in the cytoplasm. The catalysed reaction is L-threonylcarbamoyladenylate + adenosine(37) in tRNA = N(6)-L-threonylcarbamoyladenosine(37) in tRNA + AMP + H(+). Functionally, required for the formation of a threonylcarbamoyl group on adenosine at position 37 (t(6)A37) in tRNAs that read codons beginning with adenine. Is involved in the transfer of the threonylcarbamoyl moiety of threonylcarbamoyl-AMP (TC-AMP) to the N6 group of A37, together with TsaE and TsaB. TsaD likely plays a direct catalytic role in this reaction. The polypeptide is tRNA N6-adenosine threonylcarbamoyltransferase (Aeromonas hydrophila subsp. hydrophila (strain ATCC 7966 / DSM 30187 / BCRC 13018 / CCUG 14551 / JCM 1027 / KCTC 2358 / NCIMB 9240 / NCTC 8049)).